Consider the following 177-residue polypeptide: Ubiquinol-cytochrome c reductase iron-sulfur subunit (177 aa).

Residues 18 to 38 (MVLTASSVAAVGAVCTLWPLV) form a helical membrane-spanning segment. The Rieske domain maps to 88–175 (ARAVKMSELI…YTFISDKKIR (88 aa)). Positions 120, 122, 139, and 142 each coordinate [2Fe-2S] cluster. Cys125 and Cys141 are oxidised to a cystine.

The protein belongs to the Rieske iron-sulfur protein family. As to quaternary structure, the main subunits of complex b-c1 are: cytochrome b, cytochrome c1 and the Rieske protein. [2Fe-2S] cluster serves as cofactor.

It is found in the cell membrane. It catalyses the reaction a quinol + 2 Fe(III)-[cytochrome c](out) = a quinone + 2 Fe(II)-[cytochrome c](out) + 2 H(+)(out). Functionally, component of the ubiquinol-cytochrome c reductase complex (complex III or cytochrome b-c1 complex), which is a respiratory chain that generates an electrochemical potential coupled to ATP synthesis. This Rickettsia felis (strain ATCC VR-1525 / URRWXCal2) (Rickettsia azadi) protein is Ubiquinol-cytochrome c reductase iron-sulfur subunit (petA).